The primary structure comprises 209 residues: Dual specificity phosphatase 29 (209 aa).

One can recognise a Tyrosine-protein phosphatase domain in the interval 45–193 (HVNEVWPNLY…LRELDIKLAL (149 aa)). Position 137 to 144 (137 to 144 (NCAMGRSR)) interacts with substrate. Cys138 acts as the Phosphocysteine intermediate in catalysis.

It belongs to the protein-tyrosine phosphatase family. Non-receptor class dual specificity subfamily.

It localises to the cytoplasm. The protein resides in the nucleus. It carries out the reaction O-phospho-L-tyrosyl-[protein] + H2O = L-tyrosyl-[protein] + phosphate. The catalysed reaction is O-phospho-L-seryl-[protein] + H2O = L-seryl-[protein] + phosphate. The enzyme catalyses O-phospho-L-threonyl-[protein] + H2O = L-threonyl-[protein] + phosphate. Dual specificity phosphatase able to dephosphorylate phosphotyrosine, phosphoserine and phosphothreonine residues, with a preference for phosphotyrosine as a substrate. Its function is as follows. Dual specificity phosphatase able to dephosphorylate phosphotyrosine, phosphoserine and phosphothreonine residues within the same substrate, with a preference for phosphotyrosine as a substrate. Involved in the modulation of AMPK and MAPK1/2 signaling pathway. This is Dual specificity phosphatase 29 (dusp29) from Xenopus laevis (African clawed frog).